A 121-amino-acid chain; its full sequence is Small ribosomal subunit protein uS13 (121 aa).

Residues histidine 91–lysine 121 form a disordered region. Basic residues predominate over residues alanine 106–lysine 121.

It belongs to the universal ribosomal protein uS13 family. As to quaternary structure, part of the 30S ribosomal subunit. Forms a loose heterodimer with protein S19. Forms two bridges to the 50S subunit in the 70S ribosome.

In terms of biological role, located at the top of the head of the 30S subunit, it contacts several helices of the 16S rRNA. In the 70S ribosome it contacts the 23S rRNA (bridge B1a) and protein L5 of the 50S subunit (bridge B1b), connecting the 2 subunits; these bridges are implicated in subunit movement. Contacts the tRNAs in the A and P-sites. This chain is Small ribosomal subunit protein uS13, found in Listeria welshimeri serovar 6b (strain ATCC 35897 / DSM 20650 / CCUG 15529 / CIP 8149 / NCTC 11857 / SLCC 5334 / V8).